The primary structure comprises 119 residues: Small ribosomal subunit protein uS10 (119 aa).

Ala-2 carries the post-translational modification N-acetylalanine. A Glycyl lysine isopeptide (Lys-Gly) (interchain with G-Cter in ubiquitin) cross-link involves residue Lys-4. Lys-8 bears the N6-succinyllysine; alternate mark. Residue Lys-8 forms a Glycyl lysine isopeptide (Lys-Gly) (interchain with G-Cter in ubiquitin); alternate linkage. Position 9 is a phosphothreonine (Thr-9). An N6-acetyllysine mark is found at Lys-34 and Lys-75. Ser-93 carries the post-translational modification Phosphoserine.

Belongs to the universal ribosomal protein uS10 family. Component of the 40S small ribosomal subunit. Polyubiquitinated by ZNF598 via 'Lys-63'-linked ubiquitin chains when a ribosome has stalled, initiating the ribosome quality control (RQC) pathway to degrade the potentially detrimental aberrant nascent polypeptide. Deubiquitinated by OTUD3 and USP21, antagonizing ZNF598 activity. In terms of processing, ufmylated by UFL1.

It is found in the cytoplasm. Its function is as follows. Component of the small ribosomal subunit. The ribosome is a large ribonucleoprotein complex responsible for the synthesis of proteins in the cell. The polypeptide is Small ribosomal subunit protein uS10 (RPS20) (Sus scrofa (Pig)).